Consider the following 249-residue polypeptide: DNA repair protein RecO (249 aa).

Belongs to the RecO family.

Functionally, involved in DNA repair and RecF pathway recombination. This is DNA repair protein RecO from Rhodopseudomonas palustris (strain BisB5).